Consider the following 611-residue polypeptide: mRNA export factor GLE1 (611 aa).

Disordered regions lie at residues 69-94 and 220-243; these read SEDE…SQIC and KIRS…EKIR. Residues 71–89 are compositionally biased toward acidic residues; that stretch reads DEMESDEGEESDDEEEEED.

It belongs to the GLE1 family. As to quaternary structure, part of the nuclear pore complex (NPC). The NPC has an eight-fold symmetrical structure comprising a central transport channel and two rings, the cytoplasmic and nuclear rings, to which eight filaments are attached. The cytoplasmic filaments have loose ends, while the nuclear filaments are joined in a distal ring, forming a nuclear basket. NPCs are highly dynamic in configuration and composition, and can be devided in 3 subcomplexes, the NUP62 subcomplex, the NUP107-160 subcomplex and the NUP93 subcomplex, containing approximately 30 different nucleoporin proteins.

The protein resides in the nucleus envelope. Its subcellular location is the nucleus. It is found in the nuclear pore complex. Required for seed viability. The chain is mRNA export factor GLE1 from Arabidopsis thaliana (Mouse-ear cress).